Reading from the N-terminus, the 436-residue chain is GTPase Obg (436 aa).

Positions 1 to 159 (MAFVDQATIE…LKVKLELRVL (159 aa)) constitute an Obg domain. Positions 160 to 335 (ADVGLVGFPS…LLLKVADLLD (176 aa)) constitute an OBG-type G domain. GTP-binding positions include 166-173 (GFPSAGKS), 191-195 (FTTID), 213-216 (DLPG), 285-288 (TKMD), and 316-318 (SSV). 2 residues coordinate Mg(2+): Ser173 and Thr193. Positions 357-436 (KDDHQSTDFQ…GADFAFEFEE (80 aa)) constitute an OCT domain.

The protein belongs to the TRAFAC class OBG-HflX-like GTPase superfamily. OBG GTPase family. Monomer. Mg(2+) serves as cofactor.

The protein resides in the cytoplasm. Its function is as follows. An essential GTPase which binds GTP, GDP and possibly (p)ppGpp with moderate affinity, with high nucleotide exchange rates and a fairly low GTP hydrolysis rate. Plays a role in control of the cell cycle, stress response, ribosome biogenesis and in those bacteria that undergo differentiation, in morphogenesis control. This Oenococcus oeni (strain ATCC BAA-331 / PSU-1) protein is GTPase Obg.